The chain runs to 64 residues: UPF0434 protein BOV_A0835 (64 aa).

It belongs to the UPF0434 family.

The protein is UPF0434 protein BOV_A0835 of Brucella ovis (strain ATCC 25840 / 63/290 / NCTC 10512).